The chain runs to 596 residues: Fructan 1-exohydrolase (596 aa).

An N-terminal signal peptide occupies residues 1-20 (MAQAWAFLLPVLVLGSYVTS). D75 is a catalytic residue. N-linked (GlcNAc...) asparagine glycosylation is found at N168, N236, and N248. A disulfide bridge links C446 with C492. N567 carries N-linked (GlcNAc...) asparagine glycosylation.

Belongs to the glycosyl hydrolase 32 family.

The catalysed reaction is Hydrolysis of terminal, non-reducing (2-&gt;1)-linked beta-D-fructofuranose residues in fructans.. Its activity is regulated as follows. Inhibited by sucrose. Functionally, hydrolyzes inulin-type beta-(2,1)-fructans. May play a role as a beta-(2,1)-trimmer during graminan biosynthesis. In Aegilops tauschii (Tausch's goatgrass), this protein is Fructan 1-exohydrolase.